The primary structure comprises 205 residues: MIASFDIGIKNFAFAVKRDGEFVLVENVNLLGDFVTKNDLNKTPKSALVEMMDRLNLDSKGQIKKTMVESILTAQKKSSPKQRAIDLGVKLFETMDRYRSFWTECDTFLVERQMVSNMQALKLSHYLEAYLKIHYPDKSVVNYSASNKTRKLGAPPLPTKPDRKRWTVEYAASILTGRHLDKFQSCPKKDDLADVVCMIEAYQKM.

The protein belongs to the IIV-6 170L family.

This is an uncharacterized protein from Invertebrate iridescent virus 3 (IIV-3).